The primary structure comprises 230 residues: MCRLRVLLLLLPLAFVSSSALPIHDVDSQQNTSGFLGLQRLLQSFSRLFLKNDLLRDLDNFFSSPMDFRDLPRNFHQEENQEHRMGNHTLSSHLQIDKVTDNQTGEVLISEKVEASIEPERNPEGDWKVPKVEAKEPPVPVQKVTDSLHPEPRQVAFWIMKMPRRRTQPDVQDGGRWLIEKRHRMQAIRDGLRGGAREDSLEDGVHIPQHAKLPVRKTHFLYILRPSQQL.

Positions 1 to 20 are cleaved as a signal peptide; that stretch reads MCRLRVLLLLLPLAFVSSSA. Asparagine 31, asparagine 87, and asparagine 102 each carry an N-linked (GlcNAc...) asparagine glycan.

Interacts with SLXL1; Co-localize in seminiferous tubules. Interacts with SLY. In terms of processing, N-glycosylated during spermatogenesis. Not N-glycosylated in mature sperm. Testis-specific. Abundant in the seminiferous tubules where it is associated with developing spermatocytes. Expressed only in testis (at protein level). Not detectable on postnatal days 4 and 9 but after day 18 it gradually increased as the development of testes progressed. Expressed at high levels in testis and at weak levels in epididymis.

It localises to the secreted. It is found in the cytoplasmic vesicle. Its subcellular location is the secretory vesicle. The protein localises to the acrosome. In terms of biological role, involved in fertilization by facilitating sperm penetration of the zona pellucida. May promote spermatocyte apoptosis, thereby limiting sperm production. In adults, may reduce testosterone synthesis in Leydig cells. Is not essential either for development or fertility. The sequence is that of Dickkopf-like protein 1 from Mus musculus (Mouse).